Here is a 141-residue protein sequence, read N- to C-terminus: Large ribosomal subunit protein uL11 (141 aa).

Belongs to the universal ribosomal protein uL11 family. In terms of assembly, part of the ribosomal stalk of the 50S ribosomal subunit. Interacts with L10 and the large rRNA to form the base of the stalk. L10 forms an elongated spine to which L12 dimers bind in a sequential fashion forming a multimeric L10(L12)X complex. One or more lysine residues are methylated.

Its function is as follows. Forms part of the ribosomal stalk which helps the ribosome interact with GTP-bound translation factors. The chain is Large ribosomal subunit protein uL11 from Petrotoga mobilis (strain DSM 10674 / SJ95).